We begin with the raw amino-acid sequence, 1052 residues long: MSAILPGYAELHCQSNFSFLQGASHPEELVTRAGELGYAALALTDECSLAGVVRAHVEAREQKLPLIIGSSFTLQAGADAPPLDLTLLAQNREGYGNLAELITLGRGRAAKGQYLLTPADIEAPAGDNAHLRGMPDCLAILAPPPGLAAERLAEQARWLAAQCPGRAWIGLTLLHHCRDDLHRAAVEHAAHASGLPIVALGQAQMHRRSRKPLHDTLAAIRTGRSVGQCGYDLAANAERHLRSRLRLASLYPAQALAQTLAIARRCTFSLDELQYEYPDEIVPAGHTPASYLRQQTYLGARQRFPEGMTPAVAAQVEKELALINELRYEAYFLTVYDIVGYARSQGILCQGRGSAANSAVCYCLGITAVDPARGNTLFERFISKERNEPPDIDVDFEHQRREEVIQYIYEKYGRQRAALTAVVISYRPRSVLRDTGRALGVDNGIIDAVARAHQWWDGKKEMLRSLAACGLDPASRVARQWAELAETLMGFPRHLSQHPGGFVISRGKLSRLVPIENAAMPGRSVVQWDKDDLDALRLLKVDVLALGMLSVLRRALALAGQRRGRPLALHEIPPDDDATYDMICAADTIGVFQIESRAQMSMLPRLRPRQYYDLVVQVAIVRPGPIQGGMVPPYLRRRQGREDITYPGPAVRKALARTLGVPIFQEQVMQIAVDAAGFTPGEADALRRSMAAWRRKGGVDKFRAQLVGGLLARNYTADFAQALFRQIEGFGEYGFPESHAASFALLAYASSWLKCHEPEAFLAALLNSQPMGFYAPAQLVQDARRHGVRVLPADVLYSGWEASLQDAPGAARPAVRLGLNLVKGLREDSARAIEQARVRRPFADTADMARRAGLPRQALDALAAADALRTLAGHRRLASWQAAASAQSRDLLREAVIVETETPALPAPSEGQTVAADYRSVGLTLGRHPLALLRPQLAARNFQTAAVLNTYPNRRLARACGIVTVRQRPQTAKGTIFVTLEDETGPINAVVRPELIERQRRELLDATLLGIYGTWQSVDGVRHLVAQRLVDLSSLLGQLSQDGLAAASRNFH.

It belongs to the DNA polymerase type-C family. DnaE2 subfamily.

Its subcellular location is the cytoplasm. It catalyses the reaction DNA(n) + a 2'-deoxyribonucleoside 5'-triphosphate = DNA(n+1) + diphosphate. Its function is as follows. DNA polymerase involved in damage-induced mutagenesis and translesion synthesis (TLS). It is not the major replicative DNA polymerase. The protein is Error-prone DNA polymerase of Bordetella parapertussis (strain 12822 / ATCC BAA-587 / NCTC 13253).